Consider the following 107-residue polypeptide: Nucleoid-associated protein Oant_0022 (107 aa).

This sequence belongs to the YbaB/EbfC family. As to quaternary structure, homodimer.

It is found in the cytoplasm. Its subcellular location is the nucleoid. Its function is as follows. Binds to DNA and alters its conformation. May be involved in regulation of gene expression, nucleoid organization and DNA protection. In Brucella anthropi (strain ATCC 49188 / DSM 6882 / CCUG 24695 / JCM 21032 / LMG 3331 / NBRC 15819 / NCTC 12168 / Alc 37) (Ochrobactrum anthropi), this protein is Nucleoid-associated protein Oant_0022.